The primary structure comprises 80 residues: Exodeoxyribonuclease 7 small subunit (80 aa).

Belongs to the XseB family. Heterooligomer composed of large and small subunits.

Its subcellular location is the cytoplasm. It carries out the reaction Exonucleolytic cleavage in either 5'- to 3'- or 3'- to 5'-direction to yield nucleoside 5'-phosphates.. Functionally, bidirectionally degrades single-stranded DNA into large acid-insoluble oligonucleotides, which are then degraded further into small acid-soluble oligonucleotides. This chain is Exodeoxyribonuclease 7 small subunit, found in Vibrio parahaemolyticus serotype O3:K6 (strain RIMD 2210633).